Consider the following 389-residue polypeptide: 8-amino-7-oxononanoate synthase 2 (389 aa).

Arg21 is a binding site for substrate. 108 to 109 (GY) is a pyridoxal 5'-phosphate binding site. His133 contacts substrate. Pyridoxal 5'-phosphate is bound by residues Ser180, 205–208 (DDAH), and 234–237 (TLSK). The residue at position 237 (Lys237) is an N6-(pyridoxal phosphate)lysine. Thr351 lines the substrate pocket.

Belongs to the class-II pyridoxal-phosphate-dependent aminotransferase family. BioF subfamily. Homodimer. Pyridoxal 5'-phosphate serves as cofactor.

It carries out the reaction 6-carboxyhexanoyl-[ACP] + L-alanine + H(+) = (8S)-8-amino-7-oxononanoate + holo-[ACP] + CO2. It participates in cofactor biosynthesis; biotin biosynthesis. Catalyzes the decarboxylative condensation of pimeloyl-[acyl-carrier protein] and L-alanine to produce 8-amino-7-oxononanoate (AON), [acyl-carrier protein], and carbon dioxide. The chain is 8-amino-7-oxononanoate synthase 2 (bioF) from Bacillus subtilis (strain 168).